Reading from the N-terminus, the 175-residue chain is RNA pyrophosphohydrolase (175 aa).

A Nudix hydrolase domain is found at 6 to 149; sequence GYRPNVGIVI…KRDVYRRVMK (144 aa). The short motif at 38–59 is the Nudix box element; sequence GGINPGETPEQAMYRELFEEVG.

It belongs to the Nudix hydrolase family. RppH subfamily. It depends on a divalent metal cation as a cofactor.

In terms of biological role, accelerates the degradation of transcripts by removing pyrophosphate from the 5'-end of triphosphorylated RNA, leading to a more labile monophosphorylated state that can stimulate subsequent ribonuclease cleavage. This Yersinia enterocolitica serotype O:8 / biotype 1B (strain NCTC 13174 / 8081) protein is RNA pyrophosphohydrolase.